Consider the following 486-residue polypeptide: BTB/POZ domain and ankyrin repeat-containing protein NBCL (486 aa).

The 91-residue stretch at 25-115 (SDVTFSVEGR…LYSGQVSIVP (91 aa)) folds into the BTB domain. The C2HC NPR-type zinc finger occupies 121-135 (RPNCGERGCWHTHCS). Residues cysteine 124, cysteine 129, histidine 131, and cysteine 134 each coordinate Zn(2+). ANK repeat units lie at residues 257 to 286 (QKIR…LNLD), 287 to 316 (EALA…DVNY), 321 to 350 (AGKT…DPNV), and 354 to 388 (DNVT…KLRL). 2 disordered regions span residues 403-441 (EEGN…NNHN) and 464-486 (QMSD…HHDY). Low complexity-rich tracts occupy residues 406–418 (NANN…TTTT) and 432–441 (SSSSSGNNHN). Residues 466–475 (SDDHGGRHGD) are compositionally biased toward basic and acidic residues.

It belongs to the plant 'ANKYRIN-BTB/POZ' family. 'NOOT-BOP-COCH-like' (NBCL) subfamily. In terms of assembly, homodimer.

The protein resides in the nucleus. The protein localises to the cytoplasm. Its subcellular location is the cell membrane. It participates in protein modification; protein ubiquitination. In terms of biological role, may act as a substrate-specific adapter of an E3 ubiquitin-protein ligase complex (CUL3-RBX1-BTB) which mediates the ubiquitination and subsequent proteasomal degradation of target proteins. Transcriptional co-regulator involved in the promotion of leaf and floral meristem fate and determinacy. Necessary for the development of stipules at the base of petioles. Required for the abscission of senescent organs, probably by regulating the cell wall disorganization in abscission zones (AZs, e.g. pulvini at the base of leaves). Promotes slightly root-cap border cells separation from the root tip. Involved in the coordination of the symbiotic nodule developmental program; promotes the formation of root nodules by interacting directly with APP1 to modulate the expression of the nuclear transcription factor Y subunit (NF-YA1), a key nodulin. Necessary for the robust maintenance of nodule identity throughout the nodule developmental program. The sequence is that of BTB/POZ domain and ankyrin repeat-containing protein NBCL from Lupinus angustifolius (Narrow-leaved blue lupine).